The chain runs to 211 residues: Glycerol-3-phosphate acyltransferase 2 (211 aa).

The next 5 membrane-spanning stretches (helical) occupy residues 6-26, 57-77, 82-102, 124-144, and 148-168; these read FASL…VVVG, IIVF…PVIF, HYLC…PIFL, FFLI…MVSL, and ISVV…LSII.

The protein belongs to the PlsY family. In terms of assembly, probably interacts with PlsX.

Its subcellular location is the cell membrane. It carries out the reaction an acyl phosphate + sn-glycerol 3-phosphate = a 1-acyl-sn-glycero-3-phosphate + phosphate. It functions in the pathway lipid metabolism; phospholipid metabolism. Catalyzes the transfer of an acyl group from acyl-phosphate (acyl-PO(4)) to glycerol-3-phosphate (G3P) to form lysophosphatidic acid (LPA). This enzyme utilizes acyl-phosphate as fatty acyl donor, but not acyl-CoA or acyl-ACP. The chain is Glycerol-3-phosphate acyltransferase 2 from Lactobacillus acidophilus (strain ATCC 700396 / NCK56 / N2 / NCFM).